The chain runs to 210 residues: Cytochrome c biogenesis ATP-binding export protein CcmA (210 aa).

The ABC transporter domain maps to 1–208 (MHLNQLVISH…KVRTLSLDQF (208 aa)). ATP is bound at residue 38–45 (GHNGIGKT).

It belongs to the ABC transporter superfamily. CcmA exporter (TC 3.A.1.107) family. The complex is composed of two ATP-binding proteins (CcmA) and two transmembrane proteins (CcmB).

It localises to the cell inner membrane. The enzyme catalyses heme b(in) + ATP + H2O = heme b(out) + ADP + phosphate + H(+). Functionally, part of the ABC transporter complex CcmAB involved in the biogenesis of c-type cytochromes; once thought to export heme, this seems not to be the case, but its exact role is uncertain. Responsible for energy coupling to the transport system. This Haemophilus ducreyi (strain 35000HP / ATCC 700724) protein is Cytochrome c biogenesis ATP-binding export protein CcmA.